The following is a 182-amino-acid chain: GTP cyclohydrolase 1 (182 aa).

Zn(2+) is bound by residues Cys73, His76, and Cys144.

This sequence belongs to the GTP cyclohydrolase I family. Homomer.

The catalysed reaction is GTP + H2O = 7,8-dihydroneopterin 3'-triphosphate + formate + H(+). It functions in the pathway cofactor biosynthesis; 7,8-dihydroneopterin triphosphate biosynthesis; 7,8-dihydroneopterin triphosphate from GTP: step 1/1. This chain is GTP cyclohydrolase 1, found in Hydrogenobaculum sp. (strain Y04AAS1).